We begin with the raw amino-acid sequence, 1199 residues long: DNA-directed RNA polymerase subunit beta' (1199 aa).

Cysteine 60, cysteine 62, cysteine 75, and cysteine 78 together coordinate Zn(2+). The Mg(2+) site is built by aspartate 449, aspartate 451, and aspartate 453. Zn(2+)-binding residues include cysteine 818, cysteine 892, cysteine 899, and cysteine 902.

This sequence belongs to the RNA polymerase beta' chain family. RNAP is composed of a core of 2 alpha, a beta and a beta' subunit. The core is associated with a delta subunit, and at least one of epsilon or omega. When a sigma factor is associated with the core the holoenzyme is formed, which can initiate transcription. Mg(2+) is required as a cofactor. The cofactor is Zn(2+).

It catalyses the reaction RNA(n) + a ribonucleoside 5'-triphosphate = RNA(n+1) + diphosphate. Functionally, DNA-dependent RNA polymerase catalyzes the transcription of DNA into RNA using the four ribonucleoside triphosphates as substrates. This is DNA-directed RNA polymerase subunit beta' from Bacillus subtilis (strain 168).